A 469-amino-acid chain; its full sequence is MDNQQESISEDITGDLAAAVRKSWSESQDNPLLLNFNNSPIGTPTDRYSPEPATMMEGNAMNLSSLARGSTQQQQRLYGSSQTREKSDQQQQDYQLFKHHYSLGQETRESVSDILNDLTLGSPEPSERASPIRQPSVDVPPLTTRRSSIQDVQWIRHLLNPRSSFSGASSNEPTNSPGDFLNQSRAWITILHDSSAESLQAVIVLAESLKNVNSQYNLWVLHSSEVNAFQLAQVGIKTLIIDEYINLFMNFGTGSGFSASSQSTETKGELNFKWCKLFLFFSLIDRFELICYLSPTCLVLQNIDELLESTEVSDEIDNETCVLLSNKVNYINEDLVSVNQDQSSAENYDDDPQIIILKPNRAVAMCIKEYFTIYGNDFEGESKRSMFHQMNDLQIMKALFGDKWSYIDSVGYCAVPIASVPANRLNYKIIEFKILKPWERQNYIAAGQHRESIMNKWLDLWRDFLNQAN.

Methionine 1 is modified (N-acetylmethionine). The residue at position 13 (threonine 13) is a Phosphothreonine. Disordered stretches follow at residues 22 to 55, 67 to 92, and 117 to 143; these read KSWSESQDNPLLLNFNNSPIGTPTDRYSPEPATM, ARGSTQQQQRLYGSSQTREKSDQQQQ, and DLTLGSPEPSERASPIRQPSVDVPPLT. Phosphoserine is present on residues serine 23, serine 27, and serine 39. Polar residues-rich tracts occupy residues 25–42 and 67–82; these read SESQDNPLLLNFNNSPIG and ARGSTQQQQRLYGSSQ. A phosphoserine mark is found at serine 122, serine 130, serine 136, serine 147, and serine 148.

Functionally, seems to act indirectly to modify IME2 activity, thus permitting IME2 to carry out later meiotic functions. This Saccharomyces cerevisiae (strain ATCC 204508 / S288c) (Baker's yeast) protein is IME2-dependent-signaling protein (IDS2).